Here is a 450-residue protein sequence, read N- to C-terminus: Glucose-6-phosphate isomerase (450 aa).

The Proton donor role is filled by E290. Active-site residues include H311 and K425.

The protein belongs to the GPI family.

The protein localises to the cytoplasm. It carries out the reaction alpha-D-glucose 6-phosphate = beta-D-fructose 6-phosphate. The protein operates within carbohydrate biosynthesis; gluconeogenesis. Its pathway is carbohydrate degradation; glycolysis; D-glyceraldehyde 3-phosphate and glycerone phosphate from D-glucose: step 2/4. Its function is as follows. Catalyzes the reversible isomerization of glucose-6-phosphate to fructose-6-phosphate. This Listeria innocua serovar 6a (strain ATCC BAA-680 / CLIP 11262) protein is Glucose-6-phosphate isomerase.